We begin with the raw amino-acid sequence, 520 residues long: MGENDESEIIEHHDDEEMEKRRPPRTHAQSFLESVASSVKEGHSSTQSSHRLLAYSDALISIIATVMILPVAHTKIQEDEELKQSIQALLTTKIAVYLMTFLIVTVAWAAHIRLFQVIERIDDTLALLNLACMMLITFLPYTFSLMATFPNNILGILLFCACVMVIGLIQALIVLYGFSHPFLLNDQIQMSENQAYYKQHILKVIMRVPIMCLFASIFSFIFFQLSYVLLAIVIFLPYISQCLKWIRSKAIGGQTDESPDSMPFYTYHPSEPLSKERVEAFSDGVFAIVATLLILDICEGNVPDPSVVKKKFDNSLIAALQEYGPEYLAYFGSFVTVGLLWFVHHSLFLHVTKATRLMGLFNTFSLAFVGGLPLAYQLTHESPRGSRNELEAVQISCVIIFFASLFQLAIWVTALFTERETLHPYVRYGGREHTFMLAKLSLYPCVALGTFFITCILSRFSAPIFHMMEICIPFAFLLLRLLVRVALALLRWLFCSARNDLERIPVEEEESRLPINDIVT.

The interval 1 to 27 (MGENDESEIIEHHDDEEMEKRRPPRTH) is disordered. Over 1–49 (MGENDESEIIEHHDDEEMEKRRPPRTHAQSFLESVASSVKEGHSSTQSS) the chain is Cytoplasmic. Residues 9-21 (IIEHHDDEEMEKR) show a composition bias toward basic and acidic residues. The helical transmembrane segment at 50 to 72 (HRLLAYSDALISIIATVMILPVA) threads the bilayer. The RxxxFSD motif 1 motif lies at 51–57 (RLLAYSD). Residues 73–93 (HTKIQEDEELKQSIQALLTTK) lie on the Lumenal side of the membrane. Residues 74–79 (TKIQED) are short helix H1-1. The segment at 81–87 (ELKQSIQ) is short helix H2-1. A helical transmembrane segment spans residues 94-116 (IAVYLMTFLIVTVAWAAHIRLFQ). Residues 117–122 (VIERID) are Cytoplasmic-facing. A helical membrane pass occupies residues 123–144 (DTLALLNLACMMLITFLPYTFS). Residues 145–154 (LMATFPNNIL) are Lumenal-facing. The chain crosses the membrane as a helical span at residues 155-176 (GILLFCACVMVIGLIQALIVLY). The Cytoplasmic segment spans residues 177-200 (GFSHPFLLNDQIQMSENQAYYKQH). 2 consecutive transmembrane segments (helical) span residues 201–221 (ILKV…FSFI) and 222–242 (FFQL…ISQC). The Cytoplasmic portion of the chain corresponds to 243-274 (LKWIRSKAIGGQTDESPDSMPFYTYHPSEPLS). The helical transmembrane segment at 275 to 299 (KERVEAFSDGVFAIVATLLILDICE) threads the bilayer. The RxxxFSD motif 2 signature appears at 277–283 (RVEAFSD). Over 300–326 (GNVPDPSVVKKKFDNSLIAALQEYGPE) the chain is Lumenal. A short helix H1-2 region spans residues 305 to 313 (PSVVKKKFD). The interval 315-321 (SLIAALQ) is short helix H2-2. The chain crosses the membrane as a helical span at residues 327 to 349 (YLAYFGSFVTVGLLWFVHHSLFL). The Cytoplasmic segment spans residues 350 to 355 (HVTKAT). A helical transmembrane segment spans residues 356-377 (RLMGLFNTFSLAFVGGLPLAYQ). Residues 378 to 392 (LTHESPRGSRNELEA) lie on the Lumenal side of the membrane. The chain crosses the membrane as a helical span at residues 393–413 (VQISCVIIFFASLFQLAIWVT). At 414 to 433 (ALFTERETLHPYVRYGGREH) the chain is on the cytoplasmic side. The chain crosses the membrane as a helical span at residues 434-457 (TFMLAKLSLYPCVALGTFFITCIL). The Lumenal segment spans residues 458–459 (SR). The chain crosses the membrane as a helical span at residues 460 to 486 (FSAPIFHMMEICIPFAFLLLRLLVRVA). The Cytoplasmic portion of the chain corresponds to 487 to 520 (LALLRWLFCSARNDLERIPVEEEESRLPINDIVT).

It belongs to the TMEM175 family. As to quaternary structure, homodimer.

Its subcellular location is the endosome membrane. It localises to the lysosome membrane. It catalyses the reaction H(+)(in) = H(+)(out). The enzyme catalyses K(+)(in) = K(+)(out). Active at low pH (under pH 4.6): proton channel activity is activated by luminal side protons. Polyunsaturated fatty acids, such as arachidonic acid, also activate the channel activity. In terms of biological role, proton-activated proton channel that catalyzes proton efflux from endosomes and lysosomes to maintain a steady-state pH. Activated at low pH (under pH 4.6) by luminal side protons: selectively mediates lysosomal proton release from lysosomes, eliciting a proton leak that balances V-ATPase activity to maintain pH homeostasis. Regulation of lumenal pH stability is required for autophagosome-lysosome fusion. Also acts as a potassium channel at higher pH, regulating potassium conductance in endosomes and lysosomes. The chain is Endosomal/lysosomal proton channel TMEM175 from Danio rerio (Zebrafish).